We begin with the raw amino-acid sequence, 216 residues long: uncharacterized protein (216 aa).

Residues 5–25 traverse the membrane as a helical segment; it reads YVKALVAVTVALGVLLPSTIS. Composition is skewed to low complexity over residues 28 to 67 and 89 to 108; these read KSFSGRSSSSYSSRSSSSSYSGSYKSSPKSSYSSGSSSSS and KASSSSSKKSSGTFSGATSK. The tract at residues 28 to 115 is disordered; that stretch reads KSFSGRSSSS…TSKVTGKTYS (88 aa). Helical transmembrane passes span 137 to 157 and 183 to 203; these read GFAPSGWFGYYSGFTMGMFMI and IAWIVDIIALIIILIIVIALI.

Its subcellular location is the cell membrane. This is an uncharacterized protein from Bacillus subtilis (strain 168).